Consider the following 161-residue polypeptide: uncharacterized protein (161 aa).

Residues 16–36 (KLGLVVAIFFFMMGTTVVVLY) traverse the membrane as a helical segment.

It is found in the membrane. This is an uncharacterized protein from Encephalitozoon cuniculi (strain GB-M1) (Microsporidian parasite).